A 591-amino-acid polypeptide reads, in one-letter code: Probable translation initiation factor IF-2 (591 aa).

Residues 7–223 form the tr-type G domain; sequence LRTPIVCVMG…LLGLAQKFLE (217 aa). Residues 16 to 23 are G1; the sequence is GHVDHGKT. Residue 16–23 coordinates GTP; the sequence is GHVDHGKT. The interval 41-45 is G2; that stretch reads AITQH. The tract at residues 78–81 is G3; the sequence is DTPG. Residues 78–82 and 132–135 contribute to the GTP site; these read DTPGH and NKID. Residues 132 to 135 are G4; the sequence is NKID. The tract at residues 200 to 202 is G5; it reads SAM.

This sequence belongs to the TRAFAC class translation factor GTPase superfamily. Classic translation factor GTPase family. IF-2 subfamily.

Functionally, function in general translation initiation by promoting the binding of the formylmethionine-tRNA to ribosomes. Seems to function along with eIF-2. In Methanosarcina barkeri (strain Fusaro / DSM 804), this protein is Probable translation initiation factor IF-2.